A 304-amino-acid chain; its full sequence is Olfactory receptor 4K13 (304 aa).

The Extracellular segment spans residues 1–25; sequence MERANHSVVSEFILLGLSKSQNLQI. Asparagine 5 is a glycosylation site (N-linked (GlcNAc...) asparagine). Residues 26 to 49 form a helical membrane-spanning segment; that stretch reads LFFLGFSVVFVGIVLGNLLILVTV. At 50–57 the chain is on the cytoplasmic side; that stretch reads TFDSLLHT. A helical membrane pass occupies residues 58–79; the sequence is PMYFLLSNLSCIDMILASFATP. Residues 80–100 are Extracellular-facing; the sequence is KMIVDFLRERKTISWWGCYSQ. A disulfide bridge connects residues cysteine 97 and cysteine 189. Residues 101 to 120 form a helical membrane-spanning segment; sequence MFFMHLLGGSEMMLLVAMAI. The Cytoplasmic portion of the chain corresponds to 121-139; that stretch reads DRYVAICKPLHYMTIMSPR. A helical transmembrane segment spans residues 140–158; sequence VLTGLLLSSYAVGFVHSSS. At 159–195 the chain is on the extracellular side; that stretch reads QMAFMLTLPFCGPNVIDSFFCDLPLVIKLACKDTYIL. A helical membrane pass occupies residues 196–219; sequence QLLVIADSGLLSLVCFLLLLVSYG. Topologically, residues 220-235 are cytoplasmic; it reads VIIFSVRYRAASRSSK. The helical transmembrane segment at 236–258 threads the bilayer; it reads AFSTLSAHITVVTLFFAPCVFIY. The Extracellular portion of the chain corresponds to 259–269; sequence VWPFSRYSVDK. The chain crosses the membrane as a helical span at residues 270–289; that stretch reads ILSVFYTIFTPLLNPIIYTL. Topologically, residues 290–304 are cytoplasmic; it reads RNQEVKAAIKKRLCI.

It belongs to the G-protein coupled receptor 1 family.

Its subcellular location is the cell membrane. Its function is as follows. Odorant receptor. The chain is Olfactory receptor 4K13 (OR4K13) from Homo sapiens (Human).